A 782-amino-acid chain; its full sequence is uncharacterized protein (782 aa).

2 disordered regions span residues 1–25 (MFSP…STTS) and 175–195 (RPRT…EDLR). The segment covering 13–25 (ESESVSNCESTTS) has biased composition (low complexity). Residues 183–195 (RAGDASMSREDLR) show a composition bias toward basic and acidic residues. 4 coiled-coil regions span residues 223–331 (RENR…STLN), 348–398 (LSQF…VSTL), 428–601 (NRIN…QLLN), and 699–743 (TIET…IIAK). Residues 748-782 (NIPKTEKSSPMKKVPPIENFRAKSQTSITGLSPVL) are disordered. Residues 769-782 (AKSQTSITGLSPVL) are compositionally biased toward polar residues.

This is an uncharacterized protein from Caenorhabditis elegans.